The following is a 207-amino-acid chain: 3-demethoxyubiquinol 3-hydroxylase (207 aa).

Positions 56, 86, 89, 138, 170, and 173 each coordinate Fe cation.

The protein belongs to the COQ7 family. Requires Fe cation as cofactor.

It localises to the cell membrane. It catalyses the reaction a 5-methoxy-2-methyl-3-(all-trans-polyprenyl)benzene-1,4-diol + AH2 + O2 = a 3-demethylubiquinol + A + H2O. It participates in cofactor biosynthesis; ubiquinone biosynthesis. Catalyzes the hydroxylation of 2-nonaprenyl-3-methyl-6-methoxy-1,4-benzoquinol during ubiquinone biosynthesis. This Cupriavidus taiwanensis (strain DSM 17343 / BCRC 17206 / CCUG 44338 / CIP 107171 / LMG 19424 / R1) (Ralstonia taiwanensis (strain LMG 19424)) protein is 3-demethoxyubiquinol 3-hydroxylase.